The sequence spans 645 residues: Rab11 family-interacting protein 1 (645 aa).

A C2 domain is found at 1–128; sequence MSLAASAGRG…DQGRRKKQWY (128 aa). The segment covering 171–187 has biased composition (basic and acidic residues); the sequence is PFGKLKDKIKGKNKDSA. Positions 171 to 215 are disordered; sequence PFGKLKDKIKGKNKDSASDTASAIVPSVTPSVDSDDESFSKDKKK. Ser186, Ser204, Ser208, and Ser236 each carry phosphoserine. The disordered stretch occupies residues 259 to 296; that stretch reads WDDDAHEDESSSASDVMSHKRTSSTDQQPNQSNFSLPK. Residues 282 to 293 show a composition bias toward polar residues; the sequence is STDQQPNQSNFS. Ser301, Ser316, Ser340, Ser342, Ser344, Ser346, Ser357, Ser358, and Ser383 each carry phosphoserine. A disordered region spans residues 330-545; sequence PEARSEIRES…PRPHPVKPMN (216 aa). 2 stretches are compositionally biased toward basic and acidic residues: residues 378 to 391 and 418 to 432; these read SDRR…KDSM and AARE…ESKK. Position 434 is a phosphoserine (Ser434). Residues 459 to 487 are compositionally biased toward basic and acidic residues; it reads SEKEKERKGALVEAQLREEDLMRRPEKDA. Residues 573-635 enclose the FIP-RBD domain; the sequence is KKYQPSDPAF…EETPNILRVP (63 aa). The interval 581–645 is necessary for interaction with RAB4A and RAB11A, subcellular location and endosomal recycling; it reads AFAYAQLTHD…AQMGKKAGKM (65 aa).

As to quaternary structure, homooligomer. Interacts with RAB11A, RAB11B, RAB25, RAB4A and RAB14.

The protein resides in the recycling endosome. Its subcellular location is the cytoplasmic vesicle. A Rab11 effector protein involved in the endosomal recycling process. Also involved in controlling membrane trafficking along the phagocytic pathway and in phagocytosis. Interaction with RAB14 may function in the process of neurite formation. This chain is Rab11 family-interacting protein 1 (Rab11fip1), found in Mus musculus (Mouse).